The sequence spans 229 residues: Large ribosomal subunit protein uL1 (229 aa).

Belongs to the universal ribosomal protein uL1 family. In terms of assembly, part of the 50S ribosomal subunit.

Binds directly to 23S rRNA. The L1 stalk is quite mobile in the ribosome, and is involved in E site tRNA release. Functionally, protein L1 is also a translational repressor protein, it controls the translation of the L11 operon by binding to its mRNA. The polypeptide is Large ribosomal subunit protein uL1 (Caulobacter vibrioides (strain ATCC 19089 / CIP 103742 / CB 15) (Caulobacter crescentus)).